A 901-amino-acid polypeptide reads, in one-letter code: Quinate repressor protein (901 aa).

A sufficient for repression region spans residues 1–88 (MSILVRPPKR…DSLQTRRKFP (88 aa)). 2 disordered regions span residues 26–59 (LRDF…DGSR) and 878–901 (EEQG…GQPM). Residues 31 to 43 (QGNSASTPINTSA) show a composition bias toward polar residues.

This sequence in the N-terminal section; belongs to the shikimate kinase family. The protein in the 2nd section; belongs to the type-I 3-dehydroquinase family. It in the C-terminal section; belongs to the shikimate dehydrogenase family. Interacts with qutA; transcriptional activator of the quinate utilization pathway genes.

In terms of biological role, multi-domain repressor protein that negatively regulates transcription of the quinate utilization pathway genes. May mediate its repressor activity by binding directly to the qutA activator protein. The chain is Quinate repressor protein (qutR) from Emericella nidulans (strain FGSC A4 / ATCC 38163 / CBS 112.46 / NRRL 194 / M139) (Aspergillus nidulans).